Consider the following 264-residue polypeptide: Probable DNA polymerase sliding clamp 2 (264 aa).

A DNA-binding region spans residues 75–94; it reads SIAQEATVGIKISNFVRILD.

It belongs to the PCNA family.

In terms of biological role, sliding clamp subunit. Responsible for tethering the catalytic subunit of DNA polymerase to DNA during high-speed replication. This is Probable DNA polymerase sliding clamp 2 from Paramecium bursaria Chlorella virus 1 (PBCV-1).